We begin with the raw amino-acid sequence, 244 residues long: tRNA pseudouridine synthase A (244 aa).

Asp52 acts as the Nucleophile in catalysis. Tyr110 is a substrate binding site.

The protein belongs to the tRNA pseudouridine synthase TruA family. As to quaternary structure, homodimer.

The enzyme catalyses uridine(38/39/40) in tRNA = pseudouridine(38/39/40) in tRNA. Formation of pseudouridine at positions 38, 39 and 40 in the anticodon stem and loop of transfer RNAs. This chain is tRNA pseudouridine synthase A, found in Clostridium acetobutylicum (strain ATCC 824 / DSM 792 / JCM 1419 / IAM 19013 / LMG 5710 / NBRC 13948 / NRRL B-527 / VKM B-1787 / 2291 / W).